Reading from the N-terminus, the 182-residue chain is NADH-quinone oxidoreductase subunit I (182 aa).

4Fe-4S ferredoxin-type domains are found at residues 50–82 (IILSRDPDGDERCVACNLCAVACPVGCISLQKA) and 92–121 (EFFRINFSRCIFCGLCEEACPTTAIQMTPD). Positions 62, 65, 68, 72, 101, 104, 107, and 111 each coordinate [4Fe-4S] cluster.

This sequence belongs to the complex I 23 kDa subunit family. In terms of assembly, NDH-1 is composed of 14 different subunits. Subunits NuoA, H, J, K, L, M, N constitute the membrane sector of the complex. The cofactor is [4Fe-4S] cluster.

It is found in the cell inner membrane. The catalysed reaction is a quinone + NADH + 5 H(+)(in) = a quinol + NAD(+) + 4 H(+)(out). NDH-1 shuttles electrons from NADH, via FMN and iron-sulfur (Fe-S) centers, to quinones in the respiratory chain. The immediate electron acceptor for the enzyme in this species is believed to be ubiquinone. Couples the redox reaction to proton translocation (for every two electrons transferred, four hydrogen ions are translocated across the cytoplasmic membrane), and thus conserves the redox energy in a proton gradient. The chain is NADH-quinone oxidoreductase subunit I from Psychrobacter cryohalolentis (strain ATCC BAA-1226 / DSM 17306 / VKM B-2378 / K5).